A 773-amino-acid polypeptide reads, in one-letter code: Circadian clock protein PASD1 (773 aa).

One can recognise a PAS domain in the interval Tyr-30–Ser-102. The tract at residues Ser-313 to Pro-361 is disordered. The necessary for transcriptional repression stretch occupies residues Val-365–Gln-412. Residues Val-365–Gln-412 adopt a coiled-coil conformation. Disordered regions lie at residues Ser-427–His-448, Gln-506–Glu-569, and Gly-732–Cys-773. Residues Val-475 to Met-553 adopt a coiled-coil conformation. The span at Gln-506–Arg-536 shows a compositional bias: basic and acidic residues.

In terms of assembly, interacts with the CLOCK-BMAL1 heterodimer; this interaction inhibits CLOCK-BMAL1 transcriptional activation and suppress circadian timekeeping. Interacts with BMAL1. In terms of tissue distribution, testis-specific. Expressed in a broad range of cancer cells, including melanoma, lung cancer, and breast cancer (at protein level). Testis-specific. Found in histologically normal tissues from patients with uterus, lung and small intestine cancers. Widespread expression seen in solid tumors and diffuse large B-cell lymphoma (DLBCL)-derived cell lines. Isoform 2 is expressed in all DLBCL-derived cell lines, while isoform 1 is preferentially expressed in cell lines derived from non-germinal center DLBCL.

It is found in the nucleus. In terms of biological role, functions as a suppressor of the biological clock that drives the daily circadian rhythms of cells throughout the body. Acts as a nuclear repressor of the CLOCK-BMAL1 heterodimer-mediated transcriptional activation of the core clock components. Inhibits circadian clock function in cancer cells, when overexpressed. The protein is Circadian clock protein PASD1 of Homo sapiens (Human).